A 123-amino-acid chain; its full sequence is Large ribosomal subunit protein uL14 (123 aa).

It belongs to the universal ribosomal protein uL14 family. Part of the 50S ribosomal subunit. Forms a cluster with proteins L3 and L19. In the 70S ribosome, L14 and L19 interact and together make contacts with the 16S rRNA in bridges B5 and B8.

In terms of biological role, binds to 23S rRNA. Forms part of two intersubunit bridges in the 70S ribosome. This is Large ribosomal subunit protein uL14 from Yersinia pestis bv. Antiqua (strain Antiqua).